We begin with the raw amino-acid sequence, 143 residues long: MAKKIQAYIKLQVKAGQANPSPPVGPALGQHGVNIMEFCKAFNARTQGQEPGLPTPVIITVYSDRSFTFETKSTPAAVLLKKAAGITSGSARPNTQKVGTVTRAQLEEIAKAKQADLTAAEMEAAVRTIAGSARSMGLNVEGV.

The protein belongs to the universal ribosomal protein uL11 family. Part of the ribosomal stalk of the 50S ribosomal subunit. Interacts with L10 and the large rRNA to form the base of the stalk. L10 forms an elongated spine to which L12 dimers bind in a sequential fashion forming a multimeric L10(L12)X complex. In terms of processing, one or more lysine residues are methylated.

Its function is as follows. Forms part of the ribosomal stalk which helps the ribosome interact with GTP-bound translation factors. The protein is Large ribosomal subunit protein uL11 of Stutzerimonas stutzeri (strain A1501) (Pseudomonas stutzeri).